Consider the following 505-residue polypeptide: uncharacterized protein (505 aa).

Transmembrane regions (helical) follow at residues 9 to 29 (ANLT…PFIV), 49 to 69 (YFSV…SVAA), 86 to 106 (AASV…AFFI), 122 to 142 (LSIL…GFGA), 156 to 176 (IQAV…ACFA), 181 to 201 (QIQL…FYFF), 235 to 255 (IGVL…LGAS), 261 to 281 (AAII…ASLF), 310 to 330 (LLLA…LTIW), 341 to 361 (LLFI…LFYI), 371 to 391 (PAIV…TLSG), 395 to 415 (LGLY…NAIF), 435 to 455 (IIGP…IQFI), and 464 to 484 (LIAT…MLVC).

It localises to the cell membrane. May be involved in the production of the exopolysaccharide (EPS) component of the extracellular matrix during biofilm formation. EPS is responsible for the adhesion of chains of cells into bundles. This is an uncharacterized protein from Bacillus subtilis (strain 168).